The sequence spans 261 residues: Taurine import ATP-binding protein TauB (261 aa).

The ABC transporter domain maps to 4-233 (LQLERIGAQY…RYAAGESARA (230 aa)). 38–45 (GPSGSGKT) contributes to the ATP binding site.

It belongs to the ABC transporter superfamily. Taurine importer (TC 3.A.1.17.1) family. In terms of assembly, the complex is composed of two ATP-binding proteins (TauB), two transmembrane proteins (TauC) and a solute-binding protein (TauA).

It is found in the cell inner membrane. The catalysed reaction is taurine(out) + ATP + H2O = taurine(in) + ADP + phosphate + H(+). Its function is as follows. Part of the ABC transporter complex TauABC involved in taurine import. Responsible for energy coupling to the transport system. The sequence is that of Taurine import ATP-binding protein TauB from Pseudomonas savastanoi pv. phaseolicola (strain 1448A / Race 6) (Pseudomonas syringae pv. phaseolicola (strain 1448A / Race 6)).